The chain runs to 219 residues: Probable nicotinate-nucleotide adenylyltransferase (219 aa).

The protein belongs to the NadD family.

The catalysed reaction is nicotinate beta-D-ribonucleotide + ATP + H(+) = deamido-NAD(+) + diphosphate. The protein operates within cofactor biosynthesis; NAD(+) biosynthesis; deamido-NAD(+) from nicotinate D-ribonucleotide: step 1/1. Functionally, catalyzes the reversible adenylation of nicotinate mononucleotide (NaMN) to nicotinic acid adenine dinucleotide (NaAD). The chain is Probable nicotinate-nucleotide adenylyltransferase from Enterococcus faecalis (strain ATCC 700802 / V583).